We begin with the raw amino-acid sequence, 325 residues long: DNA-directed RNA polymerase subunit alpha (325 aa).

Residues 1–231 (MQTSLLKPKI…DQLSVFAALE (231 aa)) form an alpha N-terminal domain (alpha-NTD) region. The alpha C-terminal domain (alpha-CTD) stretch occupies residues 246 to 325 (IDPILLRPVD…ENWPPAGLDK (80 aa)).

This sequence belongs to the RNA polymerase alpha chain family. As to quaternary structure, homodimer. The RNAP catalytic core consists of 2 alpha, 1 beta, 1 beta' and 1 omega subunit. When a sigma factor is associated with the core the holoenzyme is formed, which can initiate transcription.

The catalysed reaction is RNA(n) + a ribonucleoside 5'-triphosphate = RNA(n+1) + diphosphate. DNA-dependent RNA polymerase catalyzes the transcription of DNA into RNA using the four ribonucleoside triphosphates as substrates. This chain is DNA-directed RNA polymerase subunit alpha, found in Burkholderia thailandensis (strain ATCC 700388 / DSM 13276 / CCUG 48851 / CIP 106301 / E264).